The chain runs to 316 residues: Transaldolase (316 aa).

Lys131 functions as the Schiff-base intermediate with substrate in the catalytic mechanism.

The protein belongs to the transaldolase family. Type 1 subfamily. In terms of assembly, homodimer.

The protein localises to the cytoplasm. The catalysed reaction is D-sedoheptulose 7-phosphate + D-glyceraldehyde 3-phosphate = D-erythrose 4-phosphate + beta-D-fructose 6-phosphate. It functions in the pathway carbohydrate degradation; pentose phosphate pathway; D-glyceraldehyde 3-phosphate and beta-D-fructose 6-phosphate from D-ribose 5-phosphate and D-xylulose 5-phosphate (non-oxidative stage): step 2/3. Functionally, transaldolase is important for the balance of metabolites in the pentose-phosphate pathway. The sequence is that of Transaldolase from Glaesserella parasuis serovar 5 (strain SH0165) (Haemophilus parasuis).